Here is a 109-residue protein sequence, read N- to C-terminus: UPF0060 membrane protein mma_0129 (109 aa).

4 consecutive transmembrane segments (helical) span residues Val7–Trp27, Gly31–Leu51, Ala63–Ile83, and Asn87–Pro107.

It belongs to the UPF0060 family.

It localises to the cell inner membrane. This Janthinobacterium sp. (strain Marseille) (Minibacterium massiliensis) protein is UPF0060 membrane protein mma_0129.